A 247-amino-acid chain; its full sequence is tRNA pseudouridine synthase A (247 aa).

Catalysis depends on Asp-52, which acts as the Nucleophile. Tyr-110 lines the substrate pocket.

Belongs to the tRNA pseudouridine synthase TruA family. As to quaternary structure, homodimer.

It catalyses the reaction uridine(38/39/40) in tRNA = pseudouridine(38/39/40) in tRNA. Formation of pseudouridine at positions 38, 39 and 40 in the anticodon stem and loop of transfer RNAs. This Hyphomonas neptunium (strain ATCC 15444) protein is tRNA pseudouridine synthase A.